Here is a 241-residue protein sequence, read N- to C-terminus: Probable transcriptional regulatory protein LHK_02347 (241 aa).

This sequence belongs to the TACO1 family.

Its subcellular location is the cytoplasm. This chain is Probable transcriptional regulatory protein LHK_02347, found in Laribacter hongkongensis (strain HLHK9).